Consider the following 401-residue polypeptide: uncharacterized protein (401 aa).

This sequence belongs to the serpin family.

May act as an inhibitor for a host chymotrypsin-like protease. This is an uncharacterized protein from Acanthamoeba polyphaga mimivirus (APMV).